Here is a 251-residue protein sequence, read N- to C-terminus: Ribonuclease HII (251 aa).

The region spanning 32–223 (GPVAGVDEAG…VRERLGLRPL (192 aa)) is the RNase H type-2 domain. A divalent metal cation-binding residues include Asp38, Glu39, and Asp132.

It belongs to the RNase HII family. Requires Mn(2+) as cofactor. Mg(2+) is required as a cofactor.

The protein resides in the cytoplasm. The enzyme catalyses Endonucleolytic cleavage to 5'-phosphomonoester.. Functionally, endonuclease that specifically degrades the RNA of RNA-DNA hybrids. This chain is Ribonuclease HII, found in Nocardia farcinica (strain IFM 10152).